Consider the following 28-residue polypeptide: Cytochrome c oxidase subunit 5B, mitochondrial (28 aa).

It belongs to the cytochrome c oxidase subunit 5B family. As to quaternary structure, component of the cytochrome c oxidase (complex IV, CIV), a multisubunit enzyme composed of a catalytic core of 3 subunits and several supernumerary subunits. The complex exists as a monomer or a dimer and forms supercomplexes (SCs) in the inner mitochondrial membrane with ubiquinol-cytochrome c oxidoreductase (cytochrome b-c1 complex, complex III, CIII).

It localises to the mitochondrion inner membrane. Its pathway is energy metabolism; oxidative phosphorylation. Its function is as follows. Component of the cytochrome c oxidase, the last enzyme in the mitochondrial electron transport chain which drives oxidative phosphorylation. The respiratory chain contains 3 multisubunit complexes succinate dehydrogenase (complex II, CII), ubiquinol-cytochrome c oxidoreductase (cytochrome b-c1 complex, complex III, CIII) and cytochrome c oxidase (complex IV, CIV), that cooperate to transfer electrons derived from NADH and succinate to molecular oxygen, creating an electrochemical gradient over the inner membrane that drives transmembrane transport and the ATP synthase. Cytochrome c oxidase is the component of the respiratory chain that catalyzes the reduction of oxygen to water. Electrons originating from reduced cytochrome c in the intermembrane space (IMS) are transferred via the dinuclear copper A center (CU(A)) of subunit 2 and heme A of subunit 1 to the active site in subunit 1, a binuclear center (BNC) formed by heme A3 and copper B (CU(B)). The BNC reduces molecular oxygen to 2 water molecules using 4 electrons from cytochrome c in the IMS and 4 protons from the mitochondrial matrix. This Solanum tuberosum (Potato) protein is Cytochrome c oxidase subunit 5B, mitochondrial.